The sequence spans 187 residues: CASP-like protein 2C1 (187 aa).

Over 1–14 (MVAAARVVSGVKAE) the chain is Cytoplasmic. A helical membrane pass occupies residues 15-35 (GLLRGACAALAAAAALLLGLS). Topologically, residues 36-54 (TQTETVLLVRKKGTVKDVQ) are extracellular. Residues 55–75 (ALWVLAMAAASAAGYHLLQLL) form a helical membrane-spanning segment. Topologically, residues 76–97 (KCLYLGRGGGRALAWTCLLLDK) are cytoplasmic. Residues 98–118 (ACAYATFATTVAAAQACVVAL) form a helical membrane-spanning segment. Residues 119-139 (DGAHALQWTKLCNIYTRFCEQ) lie on the Extracellular side of the membrane. Residues 140–160 (VAGSLVLGMLAAVGTAVLSAA) traverse the membrane as a helical segment. The Cytoplasmic portion of the chain corresponds to 161–187 (SARNVFRHYYCSSHSPPAPPPETCDAH).

It belongs to the Casparian strip membrane proteins (CASP) family. Homodimer and heterodimers.

It localises to the cell membrane. The sequence is that of CASP-like protein 2C1 from Zea mays (Maize).